The primary structure comprises 267 residues: uncharacterized protein (267 aa).

The segment at 58 to 90 is disordered; it reads RHTDDKQEKNQNEGEDNQKGENKTTDQQDGPKK. Helical transmembrane passes span 101-121 and 226-246; these read IYVL…LSQM and GMTT…AWLG.

It localises to the membrane. This is an uncharacterized protein from Caenorhabditis elegans.